Here is a 61-residue protein sequence, read N- to C-terminus: Small ribosomal subunit protein uS14 (61 aa).

Zn(2+)-binding residues include Cys-24, Cys-27, Cys-40, and Cys-43.

This sequence belongs to the universal ribosomal protein uS14 family. Zinc-binding uS14 subfamily. In terms of assembly, part of the 30S ribosomal subunit. Contacts proteins S3 and S10. The cofactor is Zn(2+).

Functionally, binds 16S rRNA, required for the assembly of 30S particles and may also be responsible for determining the conformation of the 16S rRNA at the A site. In Mycoplasma capricolum subsp. capricolum (strain California kid / ATCC 27343 / NCTC 10154), this protein is Small ribosomal subunit protein uS14.